The sequence spans 224 residues: (S)-2-haloacid dehalogenase H-109 (224 aa).

The Nucleophile role is filled by Asp10. An (S)-2-haloacid-binding positions include 11 to 12 (LY), Arg41, and 118 to 119 (SN). Residues 175–180 (SSNSWD) are important for catalytic activity.

It belongs to the HAD-like hydrolase superfamily. S-2-haloalkanoic acid dehalogenase family.

The catalysed reaction is an (S)-2-haloacid + H2O = a (2R)-2-hydroxycarboxylate + a halide anion + H(+). It catalyses the reaction (S)-2-chloropropanoate + H2O = (R)-lactate + chloride + H(+). In terms of biological role, catalyzes the hydrolytic dehalogenation of small (S)-2-haloalkanoic acids to yield the corresponding (R)-2-hydroxyalkanoic acids. Acts on acids of short chain lengths, C(2) to C(4), with inversion of configuration at C-2. Active with 2-halogenated carboxylic acids and converts only the S-isomer (or L-isomer) of 2-chloropropionic acid with inversion of configuration to produce R-lactate (or D-isomer). This chain is (S)-2-haloacid dehalogenase H-109, found in Pseudomonas putida (Arthrobacter siderocapsulatus).